We begin with the raw amino-acid sequence, 142 residues long: Large ribosomal subunit protein uL11 (142 aa).

This sequence belongs to the universal ribosomal protein uL11 family. Part of the ribosomal stalk of the 50S ribosomal subunit. Interacts with L10 and the large rRNA to form the base of the stalk. L10 forms an elongated spine to which L12 dimers bind in a sequential fashion forming a multimeric L10(L12)X complex. One or more lysine residues are methylated.

Forms part of the ribosomal stalk which helps the ribosome interact with GTP-bound translation factors. This is Large ribosomal subunit protein uL11 from Magnetococcus marinus (strain ATCC BAA-1437 / JCM 17883 / MC-1).